The primary structure comprises 156 residues: MRTPSKQEDLVKAFKALLKEEKFSSQGEIVTALQEAGFDNINQSKISRMLTKFGAVRTRNAKMEMVYCLPTELGVPTASSPLKNLVLDIDHNHSVVVIRTSPGAAQLIARLLDSLGKAEGILGSIAGDDTIFSTPAPGFSTEELRDAILNLFDQEL.

It belongs to the ArgR family.

Its subcellular location is the cytoplasm. Its pathway is amino-acid biosynthesis; L-arginine biosynthesis [regulation]. Its function is as follows. Regulates arginine biosynthesis genes. The protein is Arginine repressor of Proteus mirabilis (strain HI4320).